Here is a 1381-residue protein sequence, read N- to C-terminus: MKAPAVLAPGILMLLFTLVQRSNGECKEALAKSEMNVNMKYQLPNFTAETPIQNVILHEHHIFLGATNYIYVLNEEDLQKVAEYKTGPVLEHPDCFPCQDCSSKANLSGGVWKDNINMALVVDTYYDDQLISCGSVNRGTCQRHVFPHNHTADIQSEVHCIFSPQIEEPSQCPDCVVSALGAKVLSSVKDRFINFFVGNTINSSYFPHHPLHSISVRRLKETKDGFMFLTDQSYIDVLPEFRDSYPIKYVHAFESNNFIYFLTVQRETLNAQTFHTRIIRFCSLNSGLHSYMEMPLECILTEKRKKRSTKKEVFNILQAAYVSKPGAQLARQIGASLNDDILFGVFAQSKPDSAEPMDRSAMCAFPIKYVNDFFNKIVNKNNVRCLQHFYGPNHEHCFNRTLLRNSSGCEARRDEYRAEFTTALQRVDLFMGQFSEVLLTSISTFVKGDLTIANLGTSEGRFMQVVVSRSGPSTPHVNFLLDSHPVSPEVIVEHPLNQNGYTLVVTGKKITKIPLNGLGCRHFQSCSQCLSAPPFVQCGWCHDKCVRSEECPSGTWTQQICLPAIYKVFPTSAPLEGGTRLTICGWDFGFRRNNKFDLKKTRVLLGNESCTLTLSESTMNTLKCTVGPAMNKHFNMSIIISNDHGTTQYSTFSYVDPIITSISPKYGPMAGGTLLTLTGNYLNSGNSRHISIGGKTCTLKSVSNSVLECYTPAQTISTEFAVKLKIDLANRETSIFSYREDPIVYEIHPTKSFISGGSTITGVGKNLHSVSIPRMVINVHEAGRNFTVACQHRSNSEIICCTTPSLQQLNLQLPLKTKAFFMLDGILSKYFDLIYVHNPVFKPFEKPVMISMGNENVLEIKGNDIDPEAVKGEVLKVGNKSCENIHLHSEAVLCTVPNDLLKLNSELNIEWKQAISSTVLGKVIVQPDQNFTGLIAGVVSISIALLLLLGLFLWLKKRKQIKDLGSELVRYDARVHTPHLDRLVSARSVSPTTEMVSNESVDYRATFPEDQFPNSSQNGSCRQVQYPLTDMSPILTSGDSDISSPLLQNTVHIDLSVLNPELVQAVQHVVIGPSSLIVHFNEVIGRGHFGCVYHGTLLDNDGKKIHCAVKSLNRITDIGEVSQFLTEGIIMKDFSHPNVLSLLGICLRSEGSPLVVLPYMKHGDLRNFIRNETHNPTVKDLIGFGLQVAKGMKYLASKKFVHRDLAARNCMLDEKFTVKVADFGLARDMYDKEYYSVHNKTGAKLPVKWMALESLQTQKFTTKSDVWSFGVLLWELMTRGAPPYPDVNTFDITVYLLQGRRLLQPEYCPDPLYEVMLKCWHPKAEMRPSFSELVSRISAIFSTFIGEHYVHVNATYVNVKCVAPYPSLLSSEDNADDEVDT.

An N-terminal signal peptide occupies residues 1-24; it reads MKAPAVLAPGILMLLFTLVQRSNG. The Extracellular segment spans residues 25-932; sequence ECKEALAKSE…VIVQPDQNFT (908 aa). The Sema domain maps to 27–515; sequence KEALAKSEMN…TGKKITKIPL (489 aa). The N-linked (GlcNAc...) asparagine glycan is linked to asparagine 45. 4 cysteine pairs are disulfide-bonded: cysteine 95-cysteine 101, cysteine 98-cysteine 160, cysteine 133-cysteine 141, and cysteine 172-cysteine 175. Asparagine 106 is a glycosylation site (N-linked (GlcNAc...) asparagine). Asparagine 149 carries an N-linked (GlcNAc...) asparagine glycan. Asparagine 202 carries N-linked (GlcNAc...) asparagine glycosylation. Intrachain disulfides connect cysteine 298-cysteine 363 and cysteine 385-cysteine 397. N-linked (GlcNAc...) asparagine glycosylation is found at asparagine 399 and asparagine 405. Disulfide bonds link cysteine 520–cysteine 538, cysteine 526–cysteine 561, cysteine 529–cysteine 545, and cysteine 541–cysteine 551. 3 IPT/TIG domains span residues 563 to 655, 657 to 739, and 742 to 836; these read PAIY…FSYV, PIIT…FSYR, and PIVY…LIYV. The O-linked (Man) threonine glycan is linked to threonine 582. N-linked (GlcNAc...) asparagine glycans are attached at residues asparagine 607 and asparagine 635. Residues threonine 676 and threonine 761 are each glycosylated (O-linked (Man) threonine). Asparagine 785, asparagine 879, and asparagine 930 each carry an N-linked (GlcNAc...) asparagine glycan. The helical transmembrane segment at 933–955 threads the bilayer; sequence GLIAGVVSISIALLLLLGLFLWL. At 956–1381 the chain is on the cytoplasmic side; it reads KKRKQIKDLG…EDNADDEVDT (426 aa). Serine 966 bears the Phosphoserine mark. Threonine 977 bears the Phosphothreonine mark. Residues serine 990, serine 997, and serine 1000 each carry the phosphoserine modification. Phosphotyrosine is present on tyrosine 1003. A Protein kinase domain is found at 1078–1345; it reads VHFNEVIGRG…RISAIFSTFI (268 aa). Residues 1084-1092 and lysine 1110 contribute to the ATP site; that span reads IGRGHFGCV. The active-site Proton acceptor is aspartate 1204. The segment at 1212-1381 is interaction with RANBP9; that stretch reads LDEKFTVKVA…EDNADDEVDT (170 aa). Tyrosine 1230 is subject to Phosphotyrosine. Phosphotyrosine; by autocatalysis occurs at positions 1234 and 1235. The residue at position 1289 (threonine 1289) is a Phosphothreonine. The interaction with MUC20 stretch occupies residues 1320 to 1359; sequence WHPKAEMRPSFSELVSRISAIFSTFIGEHYVHVNATYVNV. Phosphotyrosine; by autocatalysis is present on residues tyrosine 1349 and tyrosine 1356. Tyrosine 1365 is modified (phosphotyrosine).

The protein belongs to the protein kinase superfamily. Tyr protein kinase family. As to quaternary structure, heterodimer made of an alpha chain (50 kDa) and a beta chain (145 kDa) which are disulfide linked. Binds PLXNB1. Interacts when phosphorylated with downstream effectors including STAT3, PIK3R1, SRC, PCLG1, GRB2 and GAB1. Interacts with SPSB1, SPSB2 and SPSB4. Interacts with INPP5D/SHIP1. When phosphorylated at Tyr-1356, interacts with INPPL1/SHIP2. Interacts with RANBP9 and RANBP10, as well as SPSB1, SPSB2, SPSB3 and SPSB4. SPSB1 binding occurs in the presence and in the absence of HGF, however HGF treatment has a positive effect on this interaction. Interacts with MUC20; prevents interaction with GRB2 and suppresses hepatocyte growth factor-induced cell proliferation. Interacts with GRB10. Interacts with PTPN1 and PTPN2. Interacts with HSP90AA1 and HSP90AB1; the interaction suppresses MET kinase activity. Interacts with tensin TNS3. Interacts (when phosphorylated) with tensin TNS4 (via SH2 domain); the interaction increases MET protein stability by inhibiting MET endocytosis and subsequent lysosomal degradation. In terms of assembly, (Microbial infection) Immunoprecipitates with L.monocytogenes InlB. InlB probably dimerizes upon binding to MET, which encourages subsequent dimerization of MET. Autophosphorylated in response to ligand binding on Tyr-1234 and Tyr-1235 in the kinase domain leading to further phosphorylation of Tyr-1349 and Tyr-1356 in the C-terminal multifunctional docking site. Dephosphorylated by PTPRJ at Tyr-1349 and Tyr-1365. Dephosphorylated by PTPN1 and PTPN2. Post-translationally, ubiquitinated. Ubiquitination by CBL regulates the receptor stability and activity through proteasomal degradation. In terms of processing, O-mannosylation of IPT/TIG domains by TMEM260 is required for protein maturation. O-mannosylated residues are composed of single mannose glycans that are not elongated or modified. (Microbial infection) Tyrosine phosphorylation is stimulated by L.monocytogenes InlB.

It is found in the membrane. The catalysed reaction is L-tyrosyl-[protein] + ATP = O-phospho-L-tyrosyl-[protein] + ADP + H(+). In its inactive state, the C-terminal tail interacts with the catalytic domain and inhibits the kinase activity. Upon ligand binding, the C-terminal tail is displaced and becomes phosphorylated, thus increasing the kinase activity. Receptor tyrosine kinase that transduces signals from the extracellular matrix into the cytoplasm by binding to hepatocyte growth factor/HGF ligand. Regulates many physiological processes including proliferation, scattering, morphogenesis and survival. Ligand binding at the cell surface induces autophosphorylation of MET on its intracellular domain that provides docking sites for downstream signaling molecules. Following activation by ligand, interacts with the PI3-kinase subunit PIK3R1, PLCG1, SRC, GRB2, STAT3 or the adapter GAB1. Recruitment of these downstream effectors by MET leads to the activation of several signaling cascades including the RAS-ERK, PI3 kinase-AKT, or PLCgamma-PKC. The RAS-ERK activation is associated with the morphogenetic effects while PI3K/AKT coordinates prosurvival effects. During embryonic development, MET signaling plays a role in gastrulation, development and migration of muscles and neuronal precursors, angiogenesis and kidney formation. In adults, participates in wound healing as well as organ regeneration and tissue remodeling. Also promotes differentiation and proliferation of hematopoietic cells. In terms of biological role, (Microbial infection) Acts as a receptor for Listeria monocytogenes internalin InlB, mediating entry of the pathogen into cells. The chain is Hepatocyte growth factor receptor (MET) from Chlorocebus aethiops (Green monkey).